We begin with the raw amino-acid sequence, 493 residues long: MDSNCIQFLHDKTILVTGVPGFLAKVFVEKILRIQPKVKKLFLLLRAADNESAMQRFHSEVLEKDLFRVLKNALGDENLKAFITEKVVPIPGDISVDNLGVKGSDLLQHMWNEIDIIVNVAATTNFDERYDVGLSVNTFGPLNVLNFAKKCVKGQLLLHVSTAYVRGEKSGLLHEKTFHMGETLNGHRKLVIETEMELMKQKLKELQKQNCSEEEISQSMKDLGMSRAKLHGWPNTYVFTKSMGEMLLGNYRENLPIVIIRPTMITSTFSEPFPGWIEGLRTIDSVIVAYGKGRLKCFLADPNSVLDLIPVDMVANAMVTAAAIHAGKLGSQTVYHVGSSCKNPITFEQIHDLAASYFTKNPLVRRDGSSILVSKGTILSTMAQFSFYMTLRYKLPLQMLRLIYVIYPWWNGNKYKDIDRKIKLAMRLVDLYRPYVLFKGIFDDTNTEKLRLKRKEINKEMYGLFEFDPKSIDWEDYMTTIHIPGLITYVLKK.

Belongs to the fatty acyl-CoA reductase family. As to expression, expressed in the endodermal cell layer surrounding the central vasculature in roots. Expressed in the hilum region of seeds. Expressed in stamen filaments and receptacle of siliques.

The enzyme catalyses a long-chain fatty acyl-CoA + 2 NADPH + 2 H(+) = a long-chain primary fatty alcohol + 2 NADP(+) + CoA. In terms of biological role, catalyzes the reduction of fatty acyl-CoA to fatty alcohols. Catalyzes specifically the formation of C18:0 and C20:0 fatty alcohols. Provides the fatty alcohols required for synthesis of suberin in roots, seed coat and wound-induced leaf tissue. Provides the fatty alcohols required for synthesis of alkyl hydroxycinnamates in root waxes. This chain is Probable fatty acyl-CoA reductase 4, found in Arabidopsis thaliana (Mouse-ear cress).